Reading from the N-terminus, the 145-residue chain is MIALIQRVSEASVTVDGQVTGTIGKGLLVLLGVEKEDDESKTKRLRDKVLGYRIFEDDAGKMNLNVQQAGGSVLVVSQFTLAADTKSGMRPSFSVGAAPADAERLYDYFVECCKDKDIQTETGIFAADMKVALLNDGPVTFWLQV.

Positions 137–138 (GP) match the Gly-cisPro motif, important for rejection of L-amino acids motif.

The protein belongs to the DTD family. In terms of assembly, homodimer.

The protein localises to the cytoplasm. The catalysed reaction is glycyl-tRNA(Ala) + H2O = tRNA(Ala) + glycine + H(+). It catalyses the reaction a D-aminoacyl-tRNA + H2O = a tRNA + a D-alpha-amino acid + H(+). Functionally, an aminoacyl-tRNA editing enzyme that deacylates mischarged D-aminoacyl-tRNAs. Also deacylates mischarged glycyl-tRNA(Ala), protecting cells against glycine mischarging by AlaRS. Acts via tRNA-based rather than protein-based catalysis; rejects L-amino acids rather than detecting D-amino acids in the active site. By recycling D-aminoacyl-tRNA to D-amino acids and free tRNA molecules, this enzyme counteracts the toxicity associated with the formation of D-aminoacyl-tRNA entities in vivo and helps enforce protein L-homochirality. This chain is D-aminoacyl-tRNA deacylase, found in Photobacterium profundum (strain SS9).